The sequence spans 238 residues: Probable 2-phosphosulfolactate phosphatase (238 aa).

The protein belongs to the ComB family. Requires Mg(2+) as cofactor.

It carries out the reaction (2R)-O-phospho-3-sulfolactate + H2O = (2R)-3-sulfolactate + phosphate. This Clostridium beijerinckii (strain ATCC 51743 / NCIMB 8052) (Clostridium acetobutylicum) protein is Probable 2-phosphosulfolactate phosphatase.